We begin with the raw amino-acid sequence, 142 residues long: Cystatin-8 (142 aa).

An N-terminal signal peptide occupies residues 1–19 (MAKPLWLSLILFIIPVALA). Residue Asn-39 is glycosylated (N-linked (GlcNAc...) asparagine). The short motif at 77–81 (QITDR) is the Secondary area of contact element. 2 cysteine pairs are disulfide-bonded: Cys-95–Cys-105 and Cys-119–Cys-139. A glycan (N-linked (GlcNAc...) asparagine) is linked at Asn-100.

It belongs to the cystatin family. As to expression, proximal caput region of the epididymis. Lower expression in the testis. Within the testis it is localized to the elongating spermatids, whereas within the epididymis it is exclusively synthesized by the proximal caput epithelium.

The protein resides in the secreted. Its function is as follows. Performs a specialized role during sperm development and maturation. This chain is Cystatin-8 (Cst8), found in Mus musculus (Mouse).